Consider the following 427-residue polypeptide: 3-phosphoshikimate 1-carboxyvinyltransferase (427 aa).

3 residues coordinate 3-phosphoshikimate: Lys-20, Ser-21, and Arg-25. Lys-20 is a phosphoenolpyruvate binding site. Gly-92 and Arg-120 together coordinate phosphoenolpyruvate. 3-phosphoshikimate is bound by residues Ser-166, Gln-168, Asp-312, and Lys-339. Gln-168 provides a ligand contact to phosphoenolpyruvate. Asp-312 serves as the catalytic Proton acceptor. Residues Arg-343 and Arg-385 each contribute to the phosphoenolpyruvate site.

Belongs to the EPSP synthase family. Monomer.

It is found in the cytoplasm. It carries out the reaction 3-phosphoshikimate + phosphoenolpyruvate = 5-O-(1-carboxyvinyl)-3-phosphoshikimate + phosphate. Its pathway is metabolic intermediate biosynthesis; chorismate biosynthesis; chorismate from D-erythrose 4-phosphate and phosphoenolpyruvate: step 6/7. Functionally, catalyzes the transfer of the enolpyruvyl moiety of phosphoenolpyruvate (PEP) to the 5-hydroxyl of shikimate-3-phosphate (S3P) to produce enolpyruvyl shikimate-3-phosphate and inorganic phosphate. The protein is 3-phosphoshikimate 1-carboxyvinyltransferase of Streptococcus pneumoniae serotype 2 (strain D39 / NCTC 7466).